Consider the following 185-residue polypeptide: Ribosome-recycling factor (185 aa).

A disordered region spans residues 143-163 (EKEKLISEDDNKKGMDDIQKE).

The protein belongs to the RRF family.

It localises to the cytoplasm. Responsible for the release of ribosomes from messenger RNA at the termination of protein biosynthesis. May increase the efficiency of translation by recycling ribosomes from one round of translation to another. The chain is Ribosome-recycling factor from Syntrophomonas wolfei subsp. wolfei (strain DSM 2245B / Goettingen).